We begin with the raw amino-acid sequence, 739 residues long: Adenosylcobalamin-dependent ribonucleoside-triphosphate reductase (739 aa).

Cys119 and Cys419 are joined by a disulfide. Residues 147-158 (SMPFSFLFDELM) form an effector region-1 region. Residues 168–313 (ARSNISQIPR…ICNLIGKAVV (146 aa)) form an effector region-2 region. Active-site residues include Cys408 and Glu410. Residues 565 to 626 (FHYGAYLIQR…NPNFASAGTV (62 aa)) form an adenosylcobalamin-binding-1 region. The interval 685–724 (LQQAPKEPIDKETYEKRSQEITGNVEEVFSQLNSDVKDLE) is adenosylcobalamin-binding-2.

This sequence belongs to the class II ribonucleoside-triphosphate reductase family. In terms of assembly, monomer. Adenosylcob(III)alamin serves as cofactor.

The catalysed reaction is a 2'-deoxyribonucleoside 5'-triphosphate + [thioredoxin]-disulfide + H2O = a ribonucleoside 5'-triphosphate + [thioredoxin]-dithiol. Allosterically regulated by ATP and dNTP. This chain is Adenosylcobalamin-dependent ribonucleoside-triphosphate reductase (rtpR), found in Lactobacillus delbrueckii subsp. bulgaricus (strain ATCC 11842 / DSM 20081 / BCRC 10696 / JCM 1002 / NBRC 13953 / NCIMB 11778 / NCTC 12712 / WDCM 00102 / Lb 14).